Reading from the N-terminus, the 604-residue chain is Prostaglandin G/H synthase 2 (604 aa).

A signal peptide spans 1-17 (MLARALLLCVALALGHA). The region spanning 18-55 (ANPCCSNPCQNRGVCMSVGFDQYQCDCTRTGFYGENCS) is the EGF-like domain. 4 cysteine pairs are disulfide-bonded: C21/C32, C22/C145, C26/C42, and C44/C54. A glycan (N-linked (GlcNAc...) asparagine) is linked at N53. R106 lines the substrate pocket. A glycan (N-linked (GlcNAc...) asparagine) is linked at N130. Catalysis depends on H193, which acts as the Proton acceptor. Y341 is a substrate binding site. The For cyclooxygenase activity role is filled by Y371. H374 provides a ligand contact to heme b. The N-linked (GlcNAc...) asparagine glycan is linked to N396. C526 is subject to S-nitrosocysteine. Cysteines 555 and 561 form a disulfide. N580 carries an N-linked (GlcNAc...) asparagine glycan.

Belongs to the prostaglandin G/H synthase family. In terms of assembly, homodimer. It depends on heme b as a cofactor. Post-translationally, S-nitrosylation by NOS2 (iNOS) activates enzyme activity. S-nitrosylation may take place on different Cys residues in addition to Cys-526.

Its subcellular location is the microsome membrane. It is found in the endoplasmic reticulum membrane. It localises to the nucleus inner membrane. The protein resides in the nucleus outer membrane. It carries out the reaction (5Z,8Z,11Z,14Z)-eicosatetraenoate + AH2 + 2 O2 = prostaglandin H2 + A + H2O. The enzyme catalyses (5Z,8Z,11Z,14Z)-eicosatetraenoate + 2 O2 = prostaglandin G2. It catalyses the reaction prostaglandin G2 + AH2 = prostaglandin H2 + A + H2O. The catalysed reaction is (5Z,8Z,11Z,14Z,17Z)-eicosapentaenoate + 2 O2 = prostaglandin G3. It carries out the reaction prostaglandin G3 + AH2 = prostaglandin H3 + A + H2O. The enzyme catalyses (8Z,11Z,14Z)-eicosatrienoate + 2 O2 = prostaglandin G1. It catalyses the reaction prostaglandin G1 + AH2 = prostaglandin H1 + A + H2O. The catalysed reaction is 2-(5Z,8Z,11Z,14Z)-eicosatetraenoyl-sn-glycero-3-phosphoethanolamine + 2 O2 = 2-(prostaglandin G2)-sn-glycero-3-phosphoethanolamine. It carries out the reaction 2-(prostaglandin G2)-sn-glycero-3-phosphoethanolamine + AH2 = 2-(prostaglandin H2)-sn-glycero-3-phosphoethanolamine + A + H2O. The enzyme catalyses 2-(5Z,8Z,11Z,14Z)-eicosatetraenoyl-sn-glycero-3-phosphocholine + 2 O2 = 2-(prostaglandin G2)-sn-glycero-3-phosphocholine. It catalyses the reaction 2-(prostaglandin G2)-sn-glycero-3-phosphocholine + AH2 = 2-(prostaglandin H2)-sn-glycero-3-phosphocholine + A + H2O. The catalysed reaction is (15S)-hydroperoxy-(5Z,8Z,11Z,13E)-eicosatetraenoate + AH2 = (15S)-hydroxy-(5Z,8Z,11Z,13E)-eicosatetraenoate + A + H2O. It carries out the reaction 2-(5Z,8Z,11Z,14Z)-eicosatetraenoyl-sn-glycero-3-phosphocholine + AH2 + O2 = 2-[(15S)-hydroxy-(5Z,8Z,11Z,13E)-eicosatetraenoyl]-sn-glycero-3-phosphocholine + A + H2O. The enzyme catalyses 2-(5Z,8Z,11Z,14Z)-eicosatetraenoyl-sn-glycero-3-phosphocholine + AH2 + O2 = 2-[(15R)-hydroxy-(5Z,8Z,11Z,13E)-eicosatetraenoyl]-sn-glycero-3-phosphocholine + A + H2O. It catalyses the reaction 2-(5Z,8Z,11Z,14Z)-eicosatetraenoyl-sn-glycero-3-phosphocholine + AH2 + O2 = 2-[(11R)-hydroxy-(5Z,8Z,12E,14Z)-eicosatetraenoyl]-sn-glycero-3-phosphocholine + A + H2O. The catalysed reaction is (9Z,12Z)-octadecadienoate + AH2 + O2 = 9-hydroxy-(10E,12Z)-octadecadienoate + A + H2O. It carries out the reaction (9Z,12Z)-octadecadienoate + AH2 + O2 = 13-hydroxy-(9Z,11E)-octadecadienoate + A + H2O. The enzyme catalyses (5Z,8Z,11Z,14Z)-eicosatetraenoate + AH2 + O2 = (15R)-hydroxy-(5Z,8Z,11Z,13E)-eicosatetraenoate + A + H2O. It catalyses the reaction (5Z,8Z,11Z,14Z)-eicosatetraenoate + AH2 + O2 = (11R)-hydroxy-(5Z,8Z,12E,14Z)-eicosatetraenoate + A + H2O. The catalysed reaction is (5Z,8Z,11Z,14Z,17Z)-eicosapentaenoate + AH2 + O2 = (11R)-hydroxy-(5Z,8Z,12E,14Z,17Z)-eicosapentaenoate + A + H2O. It carries out the reaction (5Z,8Z,11Z,14Z,17Z)-eicosapentaenoate + AH2 + O2 = (18S)-hydroxy-(5Z,8Z,11Z,14Z,16E)-eicosapentaenoate + A + H2O. The enzyme catalyses (5Z,8Z,11Z,14Z,17Z)-eicosapentaenoate + AH2 + O2 = (18R)-hydroxy-(5Z,8Z,11Z,14Z,16E)-eicosapentaenoate + A + H2O. It catalyses the reaction (5Z,8Z,11Z,14Z,17Z)-eicosapentaenoate + AH2 + O2 = (15R)-hydroxy-(5Z,8Z,11Z,13E,17Z)-eicosapentaenoate + A + H2O. The catalysed reaction is (5Z,8Z,11Z,14Z,17Z)-eicosapentaenoate + AH2 + O2 = (15S)-hydroxy-(5Z,8Z,11Z,13E,17Z)-eicosapentaenoate + A + H2O. It carries out the reaction (7Z,10Z,13Z,16Z,19Z)-docosapentaenoate + AH2 + O2 = 13R-hydroxy-(7Z,10Z,14E,16Z,19Z)-docosapentaenoate + A + H2O. The enzyme catalyses (4Z,7Z,10Z,13Z,16Z,19Z)-docosahexaenoate + AH2 + O2 = 13-hydroxy-(4Z,7Z,10Z,14E,16Z,19Z)-docosahexaenoate + A + H2O. It catalyses the reaction (5S)-hydroxy-(6E,8Z,11Z,14Z)-eicosatetraenoate + AH2 + O2 = (5S,15R)-dihydroxy-(6E,8Z,11Z,13E)-eicosatetraenoate + A + H2O. The catalysed reaction is (4Z,7Z,10Z,13Z,16Z,19Z)-docosahexaenoate + AH2 + O2 = 17R-hydroxy-(4Z,7Z,10Z,13Z,15E,19Z)-docosahexaenoate + A + H2O. It carries out the reaction (5S)-hydroxy-(6E,8Z,11Z,14Z)-eicosatetraenoate + AH2 + O2 = (5S,15S)-dihydroxy-(6E,8Z,11Z,13E)-eicosatetraenoate + A + H2O. The enzyme catalyses (5S)-hydroxy-(6E,8Z,11Z,14Z)-eicosatetraenoate + AH2 + O2 = (5S,11R)-dihydroxy-(6E,8Z,12E,14Z)-eicosatetraenoate + A + H2O. It catalyses the reaction 2-(5Z,8Z,11Z,14Z-eicosatetraenoyl)-glycerol + 2 O2 = 2-glyceryl-prostaglandin G2. The catalysed reaction is 2-glyceryl-prostaglandin G2 + AH2 = 2-glyceryl-prostaglandin H2 + A + H2O. It carries out the reaction (5Z,8Z,11Z,14Z)-eicosatetraenoate + O2 = (15R)-hydroperoxy-(5Z,8Z,11Z,13E)-eicosatetraenoate. The enzyme catalyses (5Z,8Z,11Z,14Z)-eicosatetraenoate + O2 = 11R-hydroperoxy-(5Z,8Z,12E,14Z)-eicosatetraenoate. It catalyses the reaction (9Z,12Z)-octadecadienoate + AH2 + O2 = (9R)-hydroxy-(10E,12Z)-octadecadienoate + A + H2O. The catalysed reaction is (9Z,12Z)-octadecadienoate + AH2 + O2 = (9S)-hydroxy-(10E,12Z)-octadecadienoate + A + H2O. It carries out the reaction (9Z,12Z)-octadecadienoate + AH2 + O2 = (13S)-hydroxy-(9Z,11E)-octadecadienoate + A + H2O. The enzyme catalyses (9Z,12Z)-octadecadienoate + AH2 + O2 = (13R)-hydroxy-(9Z,11E)-octadecadienoate + A + H2O. Its pathway is lipid metabolism; prostaglandin biosynthesis. Dual cyclooxygenase and peroxidase in the biosynthesis pathway of prostanoids, a class of C20 oxylipins mainly derived from arachidonate ((5Z,8Z,11Z,14Z)-eicosatetraenoate, AA, C20:4(n-6)), with a particular role in the inflammatory response. The cyclooxygenase activity oxygenates AA to the hydroperoxy endoperoxide prostaglandin G2 (PGG2), and the peroxidase activity reduces PGG2 to the hydroxy endoperoxide prostaglandin H2 (PGH2), the precursor of all 2-series prostaglandins and thromboxanes. This complex transformation is initiated by abstraction of hydrogen at carbon 13 (with S-stereochemistry), followed by insertion of molecular O2 to form the endoperoxide bridge between carbon 9 and 11 that defines prostaglandins. The insertion of a second molecule of O2 (bis-oxygenase activity) yields a hydroperoxy group in PGG2 that is then reduced to PGH2 by two electrons. Similarly catalyzes successive cyclooxygenation and peroxidation of dihomo-gamma-linoleate (DGLA, C20:3(n-6)) and eicosapentaenoate (EPA, C20:5(n-3)) to corresponding PGH1 and PGH3, the precursors of 1- and 3-series prostaglandins. In an alternative pathway of prostanoid biosynthesis, converts 2-arachidonoyl lysophopholipids to prostanoid lysophopholipids, which are then hydrolyzed by intracellular phospholipases to release free prostanoids. Metabolizes 2-arachidonoyl glycerol yielding the glyceryl ester of PGH2, a process that can contribute to pain response. Generates lipid mediators from n-3 and n-6 polyunsaturated fatty acids (PUFAs) via a lipoxygenase-type mechanism. Oxygenates PUFAs to hydroperoxy compounds and then reduces them to corresponding alcohols. Plays a role in the generation of resolution phase interaction products (resolvins) during both sterile and infectious inflammation. Metabolizes docosahexaenoate (DHA, C22:6(n-3)) to 17R-HDHA, a precursor of the D-series resolvins (RvDs). As a component of the biosynthetic pathway of E-series resolvins (RvEs), converts eicosapentaenoate (EPA, C20:5(n-3)) primarily to 18S-HEPE that is further metabolized by ALOX5 and LTA4H to generate 18S-RvE1 and 18S-RvE2. In vascular endothelial cells, converts docosapentaenoate (DPA, C22:5(n-3)) to 13R-HDPA, a precursor for 13-series resolvins (RvTs) shown to activate macrophage phagocytosis during bacterial infection. In activated leukocytes, contributes to oxygenation of hydroxyeicosatetraenoates (HETE) to diHETES (5,15-diHETE and 5,11-diHETE). Can also use linoleate (LA, (9Z,12Z)-octadecadienoate, C18:2(n-6)) as substrate and produce hydroxyoctadecadienoates (HODEs) in a regio- and stereospecific manner, being (9R)-HODE ((9R)-hydroxy-(10E,12Z)-octadecadienoate) and (13S)-HODE ((13S)-hydroxy-(9Z,11E)-octadecadienoate) its major products. During neuroinflammation, plays a role in neuronal secretion of specialized preresolving mediators (SPMs) 15R-lipoxin A4 that regulates phagocytic microglia. The polypeptide is Prostaglandin G/H synthase 2 (PTGS2) (Equus caballus (Horse)).